An 89-amino-acid polypeptide reads, in one-letter code: Small ribosomal subunit protein uS15 (89 aa).

The protein belongs to the universal ribosomal protein uS15 family. In terms of assembly, part of the 30S ribosomal subunit. Forms a bridge to the 50S subunit in the 70S ribosome, contacting the 23S rRNA.

In terms of biological role, one of the primary rRNA binding proteins, it binds directly to 16S rRNA where it helps nucleate assembly of the platform of the 30S subunit by binding and bridging several RNA helices of the 16S rRNA. Its function is as follows. Forms an intersubunit bridge (bridge B4) with the 23S rRNA of the 50S subunit in the ribosome. This is Small ribosomal subunit protein uS15 from Parabacteroides distasonis (strain ATCC 8503 / DSM 20701 / CIP 104284 / JCM 5825 / NCTC 11152).